Consider the following 778-residue polypeptide: uncharacterized protein (778 aa).

Polar residues-rich tracts occupy residues 1-11 (MPISSPGTRCS), 18-34 (TLQQ…QSLG), and 41-51 (GSITENYVQDS). The interval 1–60 (MPISSPGTRCSSDLKDPTLQQYSAESVSTEQSLGTFEESKGSITENYVQDSSVDEHDDGN) is disordered. 2 helical membrane passes run 356 to 381 (YILM…APII) and 401 to 423 (GFLA…GAHI).

The protein belongs to the TMCO4 family.

It localises to the golgi apparatus membrane. This is an uncharacterized protein from Schizosaccharomyces pombe (strain 972 / ATCC 24843) (Fission yeast).